Here is a 130-residue protein sequence, read N- to C-terminus: MTEKLGILAIGHGSKLPYNKEVVTQIADYIARKHSDVVVRAGFMENSEPTLGEAIEGFSGTGVTKIAAVPVFLASGVHITKDIPRILSLDENGCGTLEIDGKTVPLCYANPLGADELIADLVFKRVQEAL.

Residue histidine 12 is the Proton acceptor of the active site. Co(2+) is bound at residue histidine 12. Histidine 12 lines the Ni(2+) pocket. Substrate-binding positions include glutamate 48 and leucine 73–histidine 78. Histidine 78 provides a ligand contact to Co(2+). Histidine 78 provides a ligand contact to Ni(2+).

This sequence belongs to the CbiX family. CbiXS subfamily. As to quaternary structure, homotetramer; dimer of dimers.

It carries out the reaction Co-sirohydrochlorin + 2 H(+) = sirohydrochlorin + Co(2+). The catalysed reaction is Ni-sirohydrochlorin + 2 H(+) = sirohydrochlorin + Ni(2+). The protein operates within cofactor biosynthesis; adenosylcobalamin biosynthesis; cob(II)yrinate a,c-diamide from sirohydrochlorin (anaerobic route): step 1/10. Functionally, catalyzes the insertion of Co(2+) into sirohydrochlorin as part of the anaerobic pathway to cobalamin biosynthesis. Involved in the biosynthesis of the unique nickel-containing tetrapyrrole coenzyme F430, the prosthetic group of methyl-coenzyme M reductase (MCR), which plays a key role in methanogenesis and anaerobic methane oxidation. Catalyzes the insertion of Ni(2+) into sirohydrochlorin to yield Ni-sirohydrochlorin. This Methanosarcina barkeri (strain Fusaro / DSM 804) protein is Sirohydrochlorin cobaltochelatase.